A 447-amino-acid chain; its full sequence is N-succinylarginine dihydrolase (447 aa).

Substrate contacts are provided by residues 19-28 (AGLSFGNEAS), Asn110, and 137-138 (HR). Glu174 is an active-site residue. Arg213 is a binding site for substrate. His249 is an active-site residue. Positions 251 and 364 each coordinate substrate. Cys370 (nucleophile) is an active-site residue.

The protein belongs to the succinylarginine dihydrolase family. As to quaternary structure, homodimer.

It catalyses the reaction N(2)-succinyl-L-arginine + 2 H2O + 2 H(+) = N(2)-succinyl-L-ornithine + 2 NH4(+) + CO2. It participates in amino-acid degradation; L-arginine degradation via AST pathway; L-glutamate and succinate from L-arginine: step 2/5. Catalyzes the hydrolysis of N(2)-succinylarginine into N(2)-succinylornithine, ammonia and CO(2). The protein is N-succinylarginine dihydrolase of Yersinia pseudotuberculosis serotype O:1b (strain IP 31758).